Here is a 308-residue protein sequence, read N- to C-terminus: Acetaldehyde dehydrogenase (308 aa).

14 to 17 (TGNI) contributes to the NAD(+) binding site. Residue C129 is the Acyl-thioester intermediate of the active site. NAD(+) is bound by residues 160-168 (SAGPGTRQN) and N280.

Belongs to the acetaldehyde dehydrogenase family.

The catalysed reaction is acetaldehyde + NAD(+) + CoA = acetyl-CoA + NADH + H(+). In Thermomicrobium roseum (strain ATCC 27502 / DSM 5159 / P-2), this protein is Acetaldehyde dehydrogenase.